The chain runs to 210 residues: ATP-dependent Clp protease proteolytic subunit (210 aa).

Ser111 functions as the Nucleophile in the catalytic mechanism. His136 is a catalytic residue.

The protein belongs to the peptidase S14 family. In terms of assembly, fourteen ClpP subunits assemble into 2 heptameric rings which stack back to back to give a disk-like structure with a central cavity, resembling the structure of eukaryotic proteasomes.

It is found in the cytoplasm. It carries out the reaction Hydrolysis of proteins to small peptides in the presence of ATP and magnesium. alpha-casein is the usual test substrate. In the absence of ATP, only oligopeptides shorter than five residues are hydrolyzed (such as succinyl-Leu-Tyr-|-NHMec, and Leu-Tyr-Leu-|-Tyr-Trp, in which cleavage of the -Tyr-|-Leu- and -Tyr-|-Trp bonds also occurs).. Functionally, cleaves peptides in various proteins in a process that requires ATP hydrolysis. Has a chymotrypsin-like activity. Plays a major role in the degradation of misfolded proteins. The protein is ATP-dependent Clp protease proteolytic subunit of Halorhodospira halophila (strain DSM 244 / SL1) (Ectothiorhodospira halophila (strain DSM 244 / SL1)).